The chain runs to 166 residues: Lipoprotein signal peptidase (166 aa).

The next 4 helical transmembrane spans lie at 9 to 29 (ASGA…FDQL), 45 to 65 (ALTS…FGFL), 71 to 91 (WQRW…CFLL), and 100 to 120 (FSLS…DRLV). Residues D126 and D144 contribute to the active site. The helical transmembrane segment at 135 to 155 (WHFPAFNLADSAITVGAVLLV) threads the bilayer.

Belongs to the peptidase A8 family.

It is found in the cell inner membrane. The enzyme catalyses Release of signal peptides from bacterial membrane prolipoproteins. Hydrolyzes -Xaa-Yaa-Zaa-|-(S,diacylglyceryl)Cys-, in which Xaa is hydrophobic (preferably Leu), and Yaa (Ala or Ser) and Zaa (Gly or Ala) have small, neutral side chains.. Its pathway is protein modification; lipoprotein biosynthesis (signal peptide cleavage). This protein specifically catalyzes the removal of signal peptides from prolipoproteins. This is Lipoprotein signal peptidase from Burkholderia ambifaria (strain MC40-6).